The sequence spans 436 residues: tRNA(Ile)-lysidine synthase (436 aa).

Position 25-30 (25-30 (SGGLDS)) interacts with ATP.

Belongs to the tRNA(Ile)-lysidine synthase family.

It localises to the cytoplasm. It carries out the reaction cytidine(34) in tRNA(Ile2) + L-lysine + ATP = lysidine(34) in tRNA(Ile2) + AMP + diphosphate + H(+). In terms of biological role, ligates lysine onto the cytidine present at position 34 of the AUA codon-specific tRNA(Ile) that contains the anticodon CAU, in an ATP-dependent manner. Cytidine is converted to lysidine, thus changing the amino acid specificity of the tRNA from methionine to isoleucine. The polypeptide is tRNA(Ile)-lysidine synthase (Serratia proteamaculans (strain 568)).